Reading from the N-terminus, the 297-residue chain is Ribosomal RNA small subunit methyltransferase A (297 aa).

S-adenosyl-L-methionine-binding residues include Asn-31, Leu-33, Gly-58, Glu-79, Asp-104, and Asn-129.

This sequence belongs to the class I-like SAM-binding methyltransferase superfamily. rRNA adenine N(6)-methyltransferase family. RsmA subfamily.

It localises to the cytoplasm. It catalyses the reaction adenosine(1518)/adenosine(1519) in 16S rRNA + 4 S-adenosyl-L-methionine = N(6)-dimethyladenosine(1518)/N(6)-dimethyladenosine(1519) in 16S rRNA + 4 S-adenosyl-L-homocysteine + 4 H(+). Specifically dimethylates two adjacent adenosines (A1518 and A1519) in the loop of a conserved hairpin near the 3'-end of 16S rRNA in the 30S particle. May play a critical role in biogenesis of 30S subunits. This chain is Ribosomal RNA small subunit methyltransferase A, found in Staphylococcus aureus (strain MRSA252).